The primary structure comprises 330 residues: Clp protease adapter protein ClpF, chloroplastic (330 aa).

The N-terminal 65 residues, 1 to 65, are a transit peptide targeting the chloroplast; that stretch reads MVQSQSLSTL…KSLKQRNLLR (65 aa). Positions 66-138 are NTD, required for CLPS1-binding; sequence VEARWPFQGG…VEEESIRLQE (73 aa). Coiled coils occupy residues 112–139 and 175–195; these read NLEQYDIAQQLREKLTEVEEESIRLQEG and AAKLRDEISKLEAESLAVSAK. The region spanning 153–188 is the UVR domain; sequence GISIIRLRADLQNAIDSEDYGLAAKLRDEISKLEAE. The segment at 203–310 is yccV-like; it reads EYAFRLGQKL…TAGDFIPVKQ (108 aa).

In terms of assembly, binds to CLPC1 and CLPC2. Interacts with ClpS1; this interaction stimulates their association with ClpC. Associates with the Clp substrate HEMA1 (GluTR). As to expression, expressed constitutively in photosynthetic tissues such as leaves, stems and flowers, and, at low levels, in siliques.

The protein localises to the plastid. It is found in the chloroplast. In terms of biological role, clp protease adapter that facilitates CLPS1 recruitment to ClpC chaperones thus forming a binary adapter for selective substrate recognition and delivery to plastid Clp protease system (CLPC). This chain is Clp protease adapter protein ClpF, chloroplastic, found in Arabidopsis thaliana (Mouse-ear cress).